The following is a 215-amino-acid chain: Transcription factor LAX PANICLE 1 (215 aa).

The tract at residues 1–48 (MHDPRGFPIHPQPYHLHPTAGGLGEGRMRGGGRRRPGAKLSTDPQSVA) is disordered. The tract at residues 40 to 53 (LSTDPQSVAARERR) is basic motif; degenerate. The bHLH domain occupies 40 to 89 (LSTDPQSVAARERRHRISDRFRVLRSLVPGGSKMDTVSMLEQAIHYVKFL). A helix-loop-helix motif region spans residues 54-89 (HRISDRFRVLRSLVPGGSKMDTVSMLEQAIHYVKFL).

It belongs to the bHLH protein family. Efficient DNA binding requires dimerization with another bHLH protein. Interacts with LAX2. In terms of tissue distribution, expressed in the boundary between the shoot apical meristem (SAM) and the region of new meristem formation.

The protein resides in the nucleus. Functionally, transcription factor that seems to regulate organogenesis in postembryonic development. Involved in the regulation of shoot branching by controlling axillary meristem initiation. Functions in association with LAX2 to regulate the process of AM formation. Possesses transactivation activity in yeast. This Oryza sativa subsp. japonica (Rice) protein is Transcription factor LAX PANICLE 1.